The primary structure comprises 356 residues: UDP-N-acetylglucosamine--N-acetylmuramyl-(pentapeptide) pyrophosphoryl-undecaprenol N-acetylglucosamine transferase (356 aa).

UDP-N-acetyl-alpha-D-glucosamine is bound by residues 12-14, Asn-124, Arg-163, Ser-188, Ile-242, and Gln-287; that span reads TGG.

It belongs to the glycosyltransferase 28 family. MurG subfamily.

It localises to the cell inner membrane. It carries out the reaction di-trans,octa-cis-undecaprenyl diphospho-N-acetyl-alpha-D-muramoyl-L-alanyl-D-glutamyl-meso-2,6-diaminopimeloyl-D-alanyl-D-alanine + UDP-N-acetyl-alpha-D-glucosamine = di-trans,octa-cis-undecaprenyl diphospho-[N-acetyl-alpha-D-glucosaminyl-(1-&gt;4)]-N-acetyl-alpha-D-muramoyl-L-alanyl-D-glutamyl-meso-2,6-diaminopimeloyl-D-alanyl-D-alanine + UDP + H(+). It functions in the pathway cell wall biogenesis; peptidoglycan biosynthesis. Cell wall formation. Catalyzes the transfer of a GlcNAc subunit on undecaprenyl-pyrophosphoryl-MurNAc-pentapeptide (lipid intermediate I) to form undecaprenyl-pyrophosphoryl-MurNAc-(pentapeptide)GlcNAc (lipid intermediate II). In Pseudomonas fluorescens (strain Pf0-1), this protein is UDP-N-acetylglucosamine--N-acetylmuramyl-(pentapeptide) pyrophosphoryl-undecaprenol N-acetylglucosamine transferase.